The sequence spans 459 residues: Cysteine--tRNA ligase (459 aa).

Cys31 is a binding site for Zn(2+). Positions 33 to 43 (PTVYYNPHIGN) match the 'HIGH' region motif. 3 residues coordinate Zn(2+): Cys216, His241, and Glu245. Residues 274-278 (KMSKS) carry the 'KMSKS' region motif. Residue Lys277 participates in ATP binding.

Belongs to the class-I aminoacyl-tRNA synthetase family. As to quaternary structure, monomer. It depends on Zn(2+) as a cofactor.

The protein localises to the cytoplasm. The catalysed reaction is tRNA(Cys) + L-cysteine + ATP = L-cysteinyl-tRNA(Cys) + AMP + diphosphate. The polypeptide is Cysteine--tRNA ligase (Rickettsia rickettsii (strain Iowa)).